Here is a 206-residue protein sequence, read N- to C-terminus: MEIYENENDQVEAVKRFFAENGKALAVGVILGVGALIGWRYWNSHQVDSARSASLAYQNAVTAVSEGKPDSIPAAEKFAAENKNTYGALASLELAQQFVDKNELEKAAAQLQQGLADTSDENLKAVINLRLARVQVQLKQADAALKTLDTIKGEGWAAIVADLRGEALLSKGDKQGARSAWEAGVKSDVTPALSEMMQMKINNLSI.

The Cytoplasmic portion of the chain corresponds to 1-23; sequence MEIYENENDQVEAVKRFFAENGK. The helical transmembrane segment at 24–43 threads the bilayer; sequence ALAVGVILGVGALIGWRYWN. The Periplasmic portion of the chain corresponds to 44-206; the sequence is SHQVDSARSA…MQMKINNLSI (163 aa).

Belongs to the YfgM family. In terms of assembly, interacts with the SecYEG translocon. Forms a complex with PpiD. Also interacts with RcsB.

It is found in the cell inner membrane. Is stable during exponential growth and degraded in stationary phase by the essential FtsH protease. Degradation is influenced by the alarmone (p)ppGpp, but not by inorganic polyphosphate (polyP), RpoS, RcsB or PpiD. Functionally, may mediate protein transfer from the SecYEG translocon to the periplasmic chaperone network via its periplasmic C-terminal region. In addition, at the cytosolic site, acts as a negative regulator of RcsB. In stationary phase, the FtsH-dependent degradation of YfgM ensures the release of RcsB from YfgM and thereby permits cellular protection by the Rcs phosphorelay system. May coordinate stress responses across the inner membrane via a dynamic protein-protein interaction network inside and outside of the membrane. This chain is Ancillary SecYEG translocon subunit (yfgM), found in Escherichia coli (strain K12).